The chain runs to 75 residues: U-stichotoxin-Hau3a (75 aa).

Residues 1-19 (MNHLIILVVAAVFLGMASA) form the signal peptide. Residues 20-26 (EDVFHKR) constitute a propeptide that is removed on maturation. Intrachain disulfides connect C31-C71, C33-C61, and C54-C72.

The protein belongs to the sea anemone sodium channel inhibitory toxin family. Type I subfamily. Post-translationally, contains 3 disulfide bonds.

The protein resides in the secreted. Its subcellular location is the nematocyst. Toxin that is lethal to crab. This is U-stichotoxin-Hau3a from Heteractis aurora (Banded sea anemone).